The following is a 153-amino-acid chain: UPF0260 protein CKO_01185 (153 aa).

It belongs to the UPF0260 family.

This chain is UPF0260 protein CKO_01185, found in Citrobacter koseri (strain ATCC BAA-895 / CDC 4225-83 / SGSC4696).